Reading from the N-terminus, the 287-residue chain is MISSPKIKFGVHTFIWKKEFLGNEEYVFQDAKRWGFDGIEIATHYFDQIDPLQLKSYGEKYGVELTFCTSLPRGLSLTTKDEDCWRESIAYLERAIKFCQQCGIIQLSGPFPHPVGYLSGEPLQKRENVRMQEAFKLVAETLIKTDLKFAVEPLNRFQGYALNTVAQGLELLDAVDCPQLGLLLDLFHMNIEEKDVIKAFLQASNHCFHIHACAKDRGTPGSDSFAWGHWFKALQTMDYQGWVTIESFNFEDKELANGARLWRTVAPSNEALAQDGLKFLRQTYQTN.

The active-site Proton donor/acceptor is E152. Positions 152 and 185 each coordinate Mn(2+). A substrate-binding site is contributed by H188. Residue H211 coordinates Mn(2+). R217 lines the substrate pocket. E246 functions as the Proton donor/acceptor in the catalytic mechanism. Residue E246 participates in Mn(2+) binding.

This sequence belongs to the hyi family. Mn(2+) is required as a cofactor.

Functionally, probably catalyzes the epimerization of ketopentoses and/or ketohexoses at the C3 position. In Synechocystis sp. (strain ATCC 27184 / PCC 6803 / Kazusa), this protein is Probable ketose 3-epimerase.